The following is a 564-amino-acid chain: Chaperonin GroEL 2 (564 aa).

Residues Thr-29–Pro-32, Asp-86–Thr-90, Gly-413, and Asp-493 each bind ATP. The segment at Asp-521–Gly-541 is disordered. The segment covering Gly-530–Gly-541 has biased composition (gly residues).

The protein belongs to the chaperonin (HSP60) family. As to quaternary structure, forms a cylinder of 14 subunits composed of two heptameric rings stacked back-to-back. Interacts with the co-chaperonin GroES.

It localises to the cytoplasm. It carries out the reaction ATP + H2O + a folded polypeptide = ADP + phosphate + an unfolded polypeptide.. Its function is as follows. Together with its co-chaperonin GroES, plays an essential role in assisting protein folding. The GroEL-GroES system forms a nano-cage that allows encapsulation of the non-native substrate proteins and provides a physical environment optimized to promote and accelerate protein folding. The protein is Chaperonin GroEL 2 of Prochlorococcus marinus (strain MIT 9303).